A 280-amino-acid polypeptide reads, in one-letter code: Chaperone protein DnaJ 2 (280 aa).

A J domain is found at 6–70 (DYYAILGVPR…EKRRIYDTYG (65 aa)).

It belongs to the DnaJ family. Forms a heterononamer with DnaJ and DafA in the resting state. Three copies of each protein are present in the complex.

The protein resides in the cytoplasm. Functionally, does not influence ATP binding or hydrolysis nor ADP release. Exerts influence on the interaction of DnaK with substrates; in the presence of DafA, DnaJ inhibits substrate binding, and substrate already bound to DnaK is displaced by DnaJ and DafA. This chain is Chaperone protein DnaJ 2 (dnaJ2), found in Thermus thermophilus (strain ATCC 27634 / DSM 579 / HB8).